A 517-amino-acid polypeptide reads, in one-letter code: NAD(P)H-quinone oxidoreductase subunit 2 (517 aa).

A run of 14 helical transmembrane segments spans residues 16–36 (ILPE…DLIF), 43–63 (WLPY…YLAW), 80–100 (LSIV…LMSI), 110–130 (LAEF…LCGA), 133–153 (LVMI…MTGY), 168–188 (LLIG…LYGL), 211–231 (LGLA…ISAV), 245–265 (PTPV…ALAI), 279–299 (WHFV…VVAL), 307–327 (MLAY…VAGT), 335–355 (VFYL…IILF), 379–399 (LALS…GFFG), 401–421 (IYLF…LGLV), and 467–487 (VGIV…NPLF).

This sequence belongs to the complex I subunit 2 family. As to quaternary structure, NDH-1 can be composed of about 15 different subunits; different subcomplexes with different compositions have been identified which probably have different functions.

It localises to the cellular thylakoid membrane. The enzyme catalyses a plastoquinone + NADH + (n+1) H(+)(in) = a plastoquinol + NAD(+) + n H(+)(out). The catalysed reaction is a plastoquinone + NADPH + (n+1) H(+)(in) = a plastoquinol + NADP(+) + n H(+)(out). Functionally, NDH-1 shuttles electrons from an unknown electron donor, via FMN and iron-sulfur (Fe-S) centers, to quinones in the respiratory and/or the photosynthetic chain. The immediate electron acceptor for the enzyme in this species is believed to be plastoquinone. Couples the redox reaction to proton translocation, and thus conserves the redox energy in a proton gradient. Cyanobacterial NDH-1 also plays a role in inorganic carbon-concentration. The chain is NAD(P)H-quinone oxidoreductase subunit 2 from Rippkaea orientalis (strain PCC 8801 / RF-1) (Cyanothece sp. (strain PCC 8801)).